The chain runs to 190 residues: Protein PLANT CADMIUM RESISTANCE 8 (190 aa).

The segment at 1-31 (MGRVTTPSEEDSNNGLPVQQPGTPNQRTRVP) is disordered. Residues 13 to 28 (NNGLPVQQPGTPNQRT) are compositionally biased toward polar residues. Threonine 23 carries the post-translational modification Phosphothreonine. Residues 94 to 113 (LGTFMYLLMMPALCSHWVMG) traverse the membrane as a helical segment.

Belongs to the cornifelin family.

It localises to the cell membrane. May be involved in heavy metals transport. The chain is Protein PLANT CADMIUM RESISTANCE 8 (PCR8) from Arabidopsis thaliana (Mouse-ear cress).